The primary structure comprises 277 residues: Caspase-3 (277 aa).

An N-acetylmethionine modification is found at Met1. 2 propeptides span residues 1 to 9 (MENNETSVD) and 10 to 28 (SKSI…KSMD). N6-acetyllysine is present on Lys11. Ser26 is subject to Phosphoserine. Active-site residues include His121 and Cys163. Cys163 bears the S-nitrosocysteine; in inhibited form mark.

The protein belongs to the peptidase C14A family. Heterotetramer that consists of two anti-parallel arranged heterodimers, each one formed by a 17 kDa (p17) and a 12 kDa (p12) subunit. Interacts with BIRC6/bruce. Cleavage by granzyme B, caspase-6, caspase-8 and caspase-10 generates the two active subunits. Additional processing of the propeptides is likely due to the autocatalytic activity of the activated protease. Active heterodimers between the small subunit of caspase-7 protease and the large subunit of caspase-3 also occur and vice versa. Post-translationally, S-nitrosylated on its catalytic site cysteine in unstimulated cell lines and denitrosylated upon activation of the Fas apoptotic pathway, associated with an increase in intracellular caspase activity. Fas therefore activates caspase-3 not only by inducing the cleavage of the caspase zymogen to its active subunits, but also by stimulating the denitrosylation of its active site thiol. In terms of processing, ubiquitinated by BIRC6; this activity is inhibited by DIABLO/SMAC.

The protein resides in the cytoplasm. The enzyme catalyses Strict requirement for an Asp residue at positions P1 and P4. It has a preferred cleavage sequence of Asp-Xaa-Xaa-Asp-|- with a hydrophobic amino-acid residue at P2 and a hydrophilic amino-acid residue at P3, although Val or Ala are also accepted at this position.. Its activity is regulated as follows. Inhibited by BIRC6; following inhibition of BIRC6-caspase binding by DIABLO/SMAC, BIRC6 is subjected to caspase cleavage, leading to an increase in active caspases. Its function is as follows. Involved in the activation cascade of caspases responsible for apoptosis execution. At the onset of apoptosis, it proteolytically cleaves poly(ADP-ribose) polymerase PARP1 at a '216-Asp-|-Gly-217' bond. Cleaves and activates sterol regulatory element binding proteins (SREBPs) between the basic helix-loop-helix leucine zipper domain and the membrane attachment domain. Cleaves and activates caspase-6, -7 and -9 (CASP6, CASP7 and CASP9, respectively). Cleaves and inactivates interleukin-18 (IL18). Triggers cell adhesion in sympathetic neurons through RET cleavage. Cleaves IL-1 beta between an Asp and an Ala, releasing the mature cytokine which is involved in a variety of inflammatory processes. Cleaves and inhibits serine/threonine-protein kinase AKT1 in response to oxidative stress. Acts as an inhibitor of type I interferon production during virus-induced apoptosis by mediating cleavage of antiviral proteins CGAS, IRF3 and MAVS, thereby preventing cytokine overproduction. Also involved in pyroptosis by mediating cleavage and activation of gasdermin-E (GSDME). Cleaves XRCC4 and phospholipid scramblase proteins XKR4, XKR8 and XKR9, leading to promote phosphatidylserine exposure on apoptotic cell surface. Cleaves BIRC6 following inhibition of BIRC6-caspase binding by DIABLO/SMAC. The polypeptide is Caspase-3 (CASP3) (Mesocricetus auratus (Golden hamster)).